Consider the following 131-residue polypeptide: Small ribosomal subunit protein uS11 (131 aa).

Belongs to the universal ribosomal protein uS11 family. As to quaternary structure, part of the 30S ribosomal subunit. Interacts with proteins S7 and S18. Binds to IF-3.

Its function is as follows. Located on the platform of the 30S subunit, it bridges several disparate RNA helices of the 16S rRNA. Forms part of the Shine-Dalgarno cleft in the 70S ribosome. The sequence is that of Small ribosomal subunit protein uS11 from Halorhodospira halophila (strain DSM 244 / SL1) (Ectothiorhodospira halophila (strain DSM 244 / SL1)).